The primary structure comprises 356 residues: MPTTIQAISAEAINLPLTEPFAIASGAQAVAANVLVKVQLADGTLGLGEAAPFPAVSGETQTGTSAAIERLQSHLLGADVRGWRKLAAMLDHAEHEAAAARCGLEMAMLDALTRHYHMPLHVFFGGVSKQLETDMTITAGDEVHAAASAKAILARGIKSIKVKTAGVDVAYDLARLRAIHQAAPTAPLIVDGNCGYDVERALAFCAACKAESIPMVLFEQPLPREDWAGMAQVTAQSGFAVAADESARSAHDVLRIAREGTASVINIKLMKAGVAEGLKMIAIAQAAGLGLMIGGMVESILAMSFSANLAAGNGGFDFIDLDTPLFIAEHPFIGGFAQTGGTLQLADVAGHGVNLA.

Substrate contacts are provided by residues Thr-136 and 161 to 163; that span reads KVK. The Mg(2+) site is built by Asp-191, Glu-219, and Asp-244. Residues Lys-268 and 320–322 contribute to the substrate site; that span reads DLD.

Belongs to the mandelate racemase/muconate lactonizing enzyme family. Mg(2+) serves as cofactor.

Has epimerase activity with a variety of hydrophobic dipeptides (in vitro). Enzyme activity is highest with L-Phe-L-Tyr, but is still relatively low, suggesting that L-Phe-L-Tyr is not the physiological substrate. This is Aromatic dipeptide epimerase from Herpetosiphon aurantiacus (strain ATCC 23779 / DSM 785 / 114-95).